The sequence spans 67 residues: MKAQNVRDLDEHELKTKLKEMDEQMFRLHFQMSMGQMDGLKKVRQMRKDRARMNTILRERELAGEKK.

Belongs to the universal ribosomal protein uL29 family.

The sequence is that of Large ribosomal subunit protein uL29 from Solibacter usitatus (strain Ellin6076).